The chain runs to 489 residues: Fumarate reductase (CoM/CoB) subunit B (489 aa).

Residues 2–89 form the 2Fe-2S ferredoxin-type domain; the sequence is INVKVLRFEP…GAVIEPVDLP (88 aa). [2Fe-2S] cluster-binding residues include C53, C58, C61, and C73. 4Fe-4S ferredoxin-type domains lie at 124-158 and 178-209; these read PEDY…YAGP and AAGG…PGDA. [4Fe-4S] cluster is bound by residues C136, C139, C142, C146, C189, C192, C195, and C199.

Subunit B of the heterodimeric fumarate reductase of methanogenic Archaea, composed of subunits A (TfrA) and B (TfrB). [2Fe-2S] cluster serves as cofactor. Requires [4Fe-4S] cluster as cofactor.

Its subcellular location is the cytoplasm. It carries out the reaction coenzyme B + coenzyme M + fumarate = coenzyme M-coenzyme B heterodisulfide + succinate. Its function is as follows. Catalyzes the reduction of fumarate with reduced coenzyme M (CoM-S-H) and coenzyme B (CoB-S-H). In vitro, is able to reduces fumarate with reduced benzyl viologen, oxidize CoM-S-H and CoB-S-H to CoM-S-S-CoB with methylene blue, and reduce CoM-S-S-CoB with reduced benzyl viologen. The enzyme has specificity for the two thiol compounds as the CoB--CoM heterodisulfide reductase. The enzyme is very sensitive to oxygen. The chain is Fumarate reductase (CoM/CoB) subunit B from Methanothermobacter marburgensis (strain ATCC BAA-927 / DSM 2133 / JCM 14651 / NBRC 100331 / OCM 82 / Marburg) (Methanobacterium thermoautotrophicum).